Consider the following 668-residue polypeptide: Fe(2+) transporter FeoB (668 aa).

In terms of domain architecture, FeoB-type G spans 3–165; the sequence is SYEIALIGNP…KKAISIAVKD (163 aa). 10–17 contributes to the GTP binding site; that stretch reads GNPNVGKS. Mg(2+)-binding residues include N21, A22, T24, and G25. GTP-binding positions include 35-39, 56-59, 116-119, and 145-147; these read GVTVE, DLPG, NKMD, and SAA. Helical transmembrane passes span 344-364, 386-406, 418-438, 450-470, 515-535, 574-594, 613-633, and 643-663; these read VGAVLVFFPILAFLFFAISFL, LPGKAVISMVMGFGCNVPAIM, ILTILINPLLSCSARLPIYAL, VVILSMYALGVVLALITAFLF, IIVFGVILVWVLSVYGPSGYL, ALVFGIIAKEVVVGSLAMLYG, AYAFMAFSLIYLPCIATLAVI, and LFAVTYEMILAYVVALVISVI.

This sequence belongs to the TRAFAC class TrmE-Era-EngA-EngB-Septin-like GTPase superfamily. FeoB GTPase (TC 9.A.8) family. In terms of assembly, the crystallized N-terminal domain is a homodimer.

It is found in the cell membrane. Probable transporter of a GTP-driven Fe(2+) uptake system, might be able to transport Fe(2+) into or out of the cell. The polypeptide is Fe(2+) transporter FeoB (Methanocaldococcus jannaschii (strain ATCC 43067 / DSM 2661 / JAL-1 / JCM 10045 / NBRC 100440) (Methanococcus jannaschii)).